Reading from the N-terminus, the 147-residue chain is MKSYFYDNESDVISLDYLKEHNVLYFPMDREKENYKEPLETLCKERGYKNRDEVKLSKETPGLEDKLKIFFEEHLHDDEEIRFILDGCGFFDIRDKNDKWVKIKEKKGDLIIVPANMYHRFALDESRNIHAMRLFTDAPKWVPINRY.

His74, His76, Glu80, and His119 together coordinate Fe(2+). The Ni(2+) site is built by His74, His76, Glu80, and His119.

Belongs to the acireductone dioxygenase (ARD) family. Fe(2+) serves as cofactor. Ni(2+) is required as a cofactor.

It is found in the cytoplasm. Its subcellular location is the nucleus. The catalysed reaction is 1,2-dihydroxy-5-(methylsulfanyl)pent-1-en-3-one + O2 = 4-methylsulfanyl-2-oxobutanoate + formate + 2 H(+). It catalyses the reaction 1,2-dihydroxy-5-(methylsulfanyl)pent-1-en-3-one + O2 = 3-(methylsulfanyl)propanoate + CO + formate + 2 H(+). The protein operates within amino-acid biosynthesis; L-methionine biosynthesis via salvage pathway; L-methionine from S-methyl-5-thio-alpha-D-ribose 1-phosphate: step 5/6. Functionally, catalyzes 2 different reactions between oxygen and the acireductone 1,2-dihydroxy-3-keto-5-methylthiopentene (DHK-MTPene) depending upon the metal bound in the active site. Fe-containing acireductone dioxygenase (Fe-ARD) produces formate and 2-keto-4-methylthiobutyrate (KMTB), the alpha-ketoacid precursor of methionine in the methionine recycle pathway. Ni-containing acireductone dioxygenase (Ni-ARD) produces methylthiopropionate, carbon monoxide and formate, and does not lie on the methionine recycle pathway. This chain is Acireductone dioxygenase (adi1), found in Dictyostelium discoideum (Social amoeba).